Reading from the N-terminus, the 329-residue chain is Prostaglandin reductase 1 (329 aa).

Residue threonine 18 is modified to Phosphothreonine. Serine 20 is modified (phosphoserine). NADP(+) is bound by residues 152–155, lysine 178, tyrosine 193, asparagine 217, 239–245, 270–272, and asparagine 321; these read GAVG, CGAISVY, and FIV. At lysine 178 the chain carries N6-(2-hydroxyisobutyryl)lysine; alternate. Lysine 178 is subject to N6-acetyllysine; alternate.

Belongs to the NADP-dependent oxidoreductase L4BD family. Monomer or homodimer. In terms of tissue distribution, detected in small intestine, kidney, liver, spleen and stomach (at protein level). Detected in small intestine, kidney and liver.

The protein localises to the cytoplasm. The enzyme catalyses 13,14-dihydro-15-oxo-prostaglandin E1 + NADP(+) = 15-oxoprostaglandin E1 + NADPH + H(+). It carries out the reaction 13,14-dihydro-15-oxo-prostaglandin E2 + NAD(+) = 15-oxoprostaglandin E2 + NADH + H(+). The catalysed reaction is 13,14-dihydro-15-oxo-prostaglandin F1alpha + NADP(+) = 15-oxoprostaglandin F1alpha + NADPH + H(+). It catalyses the reaction 13,14-dihydro-15-oxo-PGF2alpha + NADP(+) = 15-oxoprostaglandin F2alpha + NADPH + H(+). The enzyme catalyses leukotriene B4 + NADP(+) = 12-oxo-leukotriene B4 + NADPH + H(+). It carries out the reaction 20-hydroxy-leukotriene B4 + NADP(+) = 12-oxo-20-hydroxy-leukotriene B4 + NADPH + H(+). The catalysed reaction is 6-trans-leukotriene B4 + NADP(+) = 12-oxo-(5S)-hydroxy-(6E,8E,10E,14Z)-eicosatetraenoate + NADPH + H(+). It catalyses the reaction (5S,12S)-dihydroxy-(6E,10E,12E,14Z)-eicosatetraenoate + NADP(+) = 12-oxo-(5S)-hydroxy-(6E,8E,10E,14Z)-eicosatetraenoate + NADPH + H(+). The enzyme catalyses an n-alkanal + NADP(+) = an alk-2-enal + NADPH + H(+). It carries out the reaction hexanal + NADP(+) = (E)-hex-2-enal + NADPH + H(+). The catalysed reaction is octanal + NADP(+) = (2E)-octenal + NADPH + H(+). It catalyses the reaction decanal + NADP(+) = (2E)-decenal + NADPH + H(+). The enzyme catalyses dodecanal + NADP(+) = (2E)-dodecenal + NADPH + H(+). It carries out the reaction 4-hydroxynonanal + NADP(+) = (E)-4-hydroxynon-2-enal + NADPH + H(+). The catalysed reaction is pentan-2-one + NADP(+) = (E)-pent-3-en-2-one + NADPH + H(+). It catalyses the reaction nonan-2-one + NADP(+) = (3E)-nonen-2-one + NADPH + H(+). In terms of biological role, NAD(P)H-dependent oxidoreductase involved in metabolic inactivation of pro- and anti-inflammatory eicosanoids: prostaglandins (PG), leukotrienes (LT) and lipoxins (LX). Catalyzes with high efficiency the reduction of the 13,14 double bond of 15-oxoPGs, including 15-oxo-PGE1, 15-oxo-PGE2, 15-oxo-PGF1-alpha and 15-oxo-PGF2-alpha. Catalyzes with lower efficiency the oxidation of the hydroxyl group at C12 of LTB4 and its derivatives, converting them into biologically less active 12-oxo-LTB4 metabolites. Reduces 15-oxo-LXA4 to 13,14 dihydro-15-oxo-LXA4, enhancing neutrophil recruitment at the inflammatory site. Plays a role in metabolic detoxification of alkenals and ketones. Reduces alpha,beta-unsaturated alkenals and ketones, particularly those with medium-chain length, showing highest affinity toward (2E)-decenal and (3E)-3-nonen-2-one. May inactivate 4-hydroxy-2-nonenal, a cytotoxic lipid constituent of oxidized low-density lipoprotein particles. In Cavia porcellus (Guinea pig), this protein is Prostaglandin reductase 1 (Ptgr1).